A 546-amino-acid chain; its full sequence is Glucose-6-phosphate isomerase (546 aa).

Catalysis depends on glutamate 353, which acts as the Proton donor. Active-site residues include histidine 384 and lysine 512.

It belongs to the GPI family.

The protein resides in the cytoplasm. It catalyses the reaction alpha-D-glucose 6-phosphate = beta-D-fructose 6-phosphate. The protein operates within carbohydrate biosynthesis; gluconeogenesis. It functions in the pathway carbohydrate degradation; glycolysis; D-glyceraldehyde 3-phosphate and glycerone phosphate from D-glucose: step 2/4. Catalyzes the reversible isomerization of glucose-6-phosphate to fructose-6-phosphate. This is Glucose-6-phosphate isomerase from Methylococcus capsulatus (strain ATCC 33009 / NCIMB 11132 / Bath).